The chain runs to 1055 residues: Focal adhesion kinase 1 (1055 aa).

A disordered region spans residues 1–29 (MAAAYLDPNLNHTPSSSTKTHLGTGTERS). An N-acetylalanine modification is found at Ala-2. Tyr-5 is subject to Phosphotyrosine. A compositionally biased stretch (polar residues) spans 10-27 (LNHTPSSSTKTHLGTGTE). Thr-13 is subject to Phosphothreonine. 2 positions are modified to phosphoserine: Ser-29 and Ser-54. The FERM domain occupies 35–355 (RVLKVFHYFE…GYCRLVNGAT (321 aa)). Lys-152 participates in a covalent cross-link: Glycyl lysine isopeptide (Lys-Gly) (interchain with G-Cter in SUMO). Tyr-397 carries the phosphotyrosine; by autocatalysis modification. Tyr-407 carries the post-translational modification Phosphotyrosine. A Protein kinase domain is found at 422-680 (IELGRCIGEG…ELKAQLSTIL (259 aa)). ATP-binding positions include 428 to 434 (IGEGQFG), Lys-454, and 500 to 502 (ELC). Asp-546 functions as the Proton acceptor in the catalytic mechanism. Phosphotyrosine occurs at positions 570 and 576. Tyr-577 carries the phosphotyrosine; by RET and SRC modification. A Phosphoserine modification is found at Ser-580. Residues 685-697 (VQQEERMRMESRR) show a composition bias toward basic and acidic residues. 2 disordered regions span residues 685–734 (VQQE…PSPQ) and 837–923 (VRLS…LDRS). The segment at 707 to 1055 (GSDEAPPKPS…LKMLGQTRPH (349 aa)) is interaction with TGFB1I1. Ser-722 carries the post-translational modification Phosphoserine. Ser-732 carries the phosphoserine; by CDK5 modification. Over residues 837–849 (VRLSRGSIDREDG) the composition is skewed to basic and acidic residues. At Ser-843 the chain carries Phosphoserine. Phosphotyrosine is present on Tyr-861. Residues 869-880 (PAAPPKKPPRPG) show a composition bias toward pro residues. Over residues 886-896 (SNLSSISSPAE) the composition is skewed to polar residues. Ser-913 bears the Phosphoserine mark. The interval 915 to 1055 (PPTANLDRSN…LKMLGQTRPH (141 aa)) is interaction with ARHGEF28. Thr-917 is subject to Phosphothreonine. Tyr-928 is subject to Phosphotyrosine.

This sequence belongs to the protein kinase superfamily. Tyr protein kinase family. FAK subfamily. As to quaternary structure, interacts with GIT1. Component of a complex that contains at least FER, CTTN and PTK2/FAK1. Interacts with BMX. Interacts with STEAP4. Interacts with ZFYVE21. Interacts with ESR1. Interacts with PIK3R1 or PIK3R2. Interacts with FGR, FLT4 and RET. Interacts with EPHA2 in resting cells; activation of EPHA2 recruits PTPN11, leading to dephosphorylation of PTK2/FAK1 and dissociation of the complex. Interacts with EPHA1 (kinase activity-dependent). Interacts with P53/TP53. Interacts (via first Pro-rich region) with CAS family members (via SH3 domain), including BCAR1, BCAR3, and CASS4. Interacts with NEDD9 (via SH3 domain). Interacts with TGFB1I1. Interacts with SRC, GRB2 and GRB7. Interacts with ARHGEF28. Interacts with SHB. Part of a complex composed of THSD1, PTK2/FAK1, TLN1 and VCL. Interacts with PXN and TLN1. Interacts with SORBS1. Interacts with STAT1. Interacts with WASL. Interacts with ARHGAP26 and SHC1. Interacts with RB1CC1; this inhibits PTK2/FAK1 activity and activation of downstream signaling pathways. Interacts with ARHGEF7. Interacts with MDM2. Interacts with PIAS1. Interacts with DCC. Interacts with LPXN (via LD motif 3). Interacts with MISP. Interacts with EMP2; regulates PTK2 activation and localization. Interacts with DSCAM. Interacts with AMBRA1. Interacts (when tyrosine-phosphorylated) with tensin TNS1; the interaction is increased by phosphorylation of TNS1. Post-translationally, phosphorylated on tyrosine residues upon activation, e.g. upon integrin signaling. Tyr-397 is the major autophosphorylation site, but other kinases can also phosphorylate this residue. Phosphorylation at Tyr-397 promotes interaction with SRC and SRC family members, leading to phosphorylation at Tyr-576, Tyr-577 and at additional tyrosine residues. FGR promotes phosphorylation at Tyr-397 and Tyr-576. FER promotes phosphorylation at Tyr-577, Tyr-861 and Tyr-928, even when cells are not adherent. Tyr-397, Tyr-576 and Ser-722 are phosphorylated only when cells are adherent. Phosphorylation at Tyr-397 is important for interaction with BMX, PIK3R1 and SHC1. Phosphorylation at Tyr-928 is important for interaction with GRB2. Dephosphorylated by PTPN11; PTPN11 is recruited to PTK2 via EPHA2 (tyrosine phosphorylated). Microtubule-induced dephosphorylation at Tyr-397 is crucial for the induction of focal adhesion disassembly; this dephosphorylation could be catalyzed by PTPN11 and regulated by ZFYVE21. Phosphorylation on tyrosine residues is enhanced by NTN1. In terms of processing, sumoylated; this enhances autophosphorylation.

It localises to the cell junction. The protein resides in the focal adhesion. The protein localises to the cell membrane. It is found in the cytoplasm. Its subcellular location is the perinuclear region. It localises to the cell cortex. The protein resides in the cytoskeleton. The protein localises to the microtubule organizing center. It is found in the centrosome. Its subcellular location is the nucleus. It localises to the cilium basal body. It carries out the reaction L-tyrosyl-[protein] + ATP = O-phospho-L-tyrosyl-[protein] + ADP + H(+). Its activity is regulated as follows. Subject to autoinhibition, mediated by interactions between the FERM domain and the kinase domain. Activated by autophosphorylation at Tyr-397. This promotes interaction with SRC and phosphorylation at Tyr-576 and Tyr-577 in the kinase activation loop by SRC. Phosphorylation at Tyr-397, Tyr-576 and Tyr-577 is required for maximal kinase activity. Functionally, non-receptor protein-tyrosine kinase that plays an essential role in regulating cell migration, adhesion, spreading, reorganization of the actin cytoskeleton, formation and disassembly of focal adhesions and cell protrusions, cell cycle progression, cell proliferation and apoptosis. Required for early embryonic development and placenta development. Required for embryonic angiogenesis, normal cardiomyocyte migration and proliferation, and normal heart development. Regulates axon growth and neuronal cell migration, axon branching and synapse formation; required for normal development of the nervous system. Plays a role in osteogenesis and differentiation of osteoblasts. Functions in integrin signal transduction, but also in signaling downstream of numerous growth factor receptors, G-protein coupled receptors (GPCR), EPHA2, netrin receptors and LDL receptors. Forms multisubunit signaling complexes with SRC and SRC family members upon activation; this leads to the phosphorylation of additional tyrosine residues, creating binding sites for scaffold proteins, effectors and substrates. Regulates numerous signaling pathways. Promotes activation of phosphatidylinositol 3-kinase and the AKT1 signaling cascade. Promotes activation of MAPK1/ERK2, MAPK3/ERK1 and the MAP kinase signaling cascade. Promotes localized and transient activation of guanine nucleotide exchange factors (GEFs) and GTPase-activating proteins (GAPs), and thereby modulates the activity of Rho family GTPases. Signaling via CAS family members mediates activation of RAC1. Phosphorylates NEDD9 following integrin stimulation. Recruits the ubiquitin ligase MDM2 to P53/TP53 in the nucleus, and thereby regulates P53/TP53 activity, P53/TP53 ubiquitination and proteasomal degradation. Phosphorylates SRC; this increases SRC kinase activity. Phosphorylates ACTN1, ARHGEF7, GRB7, RET and WASL. Promotes phosphorylation of PXN and STAT1; most likely PXN and STAT1 are phosphorylated by a SRC family kinase that is recruited to autophosphorylated PTK2/FAK1, rather than by PTK2/FAK1 itself. Promotes phosphorylation of BCAR1; GIT2 and SHC1; this requires both SRC and PTK2/FAK1. Promotes phosphorylation of BMX and PIK3R1. Does not contain a kinase domain and inhibits PTK2/FAK1 phosphorylation and signaling. Its enhanced expression can attenuate the nuclear accumulation of LPXN and limit its ability to enhance serum response factor (SRF)-dependent gene transcription. This is Focal adhesion kinase 1 from Rattus norvegicus (Rat).